Reading from the N-terminus, the 257-residue chain is Pyridoxine/pyridoxamine 5'-phosphate oxidase (257 aa).

33–36 (RIKY) provides a ligand contact to substrate. 90-93 (RFVL) is an FMN binding site. Position 95 (Lys95) interacts with pyridoxal 5'-phosphate. FMN is bound by residues 105–106 (YT) and Lys112. Pyridoxal 5'-phosphate-binding residues include Tyr152, Arg156, and Ser160. FMN-binding positions include 169–170 (QS) and Trp216. 222–224 (RLH) contacts substrate. An FMN-binding site is contributed by Arg226.

It belongs to the pyridoxamine 5'-phosphate oxidase family. Homodimer. The cofactor is FMN. Expressed in silk gland and fat body of the larva.

It carries out the reaction pyridoxamine 5'-phosphate + O2 + H2O = pyridoxal 5'-phosphate + H2O2 + NH4(+). It catalyses the reaction pyridoxine 5'-phosphate + O2 = pyridoxal 5'-phosphate + H2O2. It participates in cofactor metabolism; pyridoxal 5'-phosphate salvage; pyridoxal 5'-phosphate from pyridoxamine 5'-phosphate: step 1/1. Its pathway is cofactor metabolism; pyridoxal 5'-phosphate salvage; pyridoxal 5'-phosphate from pyridoxine 5'-phosphate: step 1/1. Its function is as follows. Catalyzes the oxidation of either pyridoxine 5'-phosphate (PNP) or pyridoxamine 5'-phosphate (PMP) into pyridoxal 5'-phosphate (PLP). In Bombyx mori (Silk moth), this protein is Pyridoxine/pyridoxamine 5'-phosphate oxidase.